Here is a 122-residue protein sequence, read N- to C-terminus: Large ribosomal subunit protein bL12 (122 aa).

It belongs to the bacterial ribosomal protein bL12 family. In terms of assembly, homodimer. Part of the ribosomal stalk of the 50S ribosomal subunit. Forms a multimeric L10(L12)X complex, where L10 forms an elongated spine to which 2 to 4 L12 dimers bind in a sequential fashion. Binds GTP-bound translation factors.

Functionally, forms part of the ribosomal stalk which helps the ribosome interact with GTP-bound translation factors. Is thus essential for accurate translation. The chain is Large ribosomal subunit protein bL12 from Staphylococcus saprophyticus subsp. saprophyticus (strain ATCC 15305 / DSM 20229 / NCIMB 8711 / NCTC 7292 / S-41).